The chain runs to 1305 residues: Cyclin-G-associated kinase (1305 aa).

Serine 2 carries the post-translational modification N-acetylserine. A phosphoserine mark is found at serine 2 and serine 16. In terms of domain architecture, Protein kinase spans 40-315 (LRVRRVLAEG…IAEVVRQLQE (276 aa)). The active-site Proton acceptor is the aspartate 173. The disordered stretch occupies residues 332–354 (LEQNGGYGNSGPSRAQPPSGGPV). The region spanning 397–564 (SVANYAKGDL…EYVCDMVAEE (168 aa)) is the Phosphatase tensin-type domain. Serine 454 is subject to Phosphoserine. The region spanning 570–708 (SKPMLVKSVV…FQVNLEVEVE (139 aa)) is the C2 tensin-type domain. The tract at residues 747-856 (FGKPELPRQP…TPRLAAGTRQ (110 aa)) is disordered. Serine 768 is subject to Phosphoserine. Threonine 774 is modified (phosphothreonine). The span at 776-789 (SDSPQSSSTDTNHF) shows a compositional bias: polar residues. Serine 781 bears the Phosphoserine mark. Position 792 is a phosphothreonine (threonine 792). A compositionally biased stretch (polar residues) spans 805–817 (VDNTSPKESQSNL). A phosphoserine mark is found at serine 809, serine 824, and serine 827. Over residues 822–832 (DGSEVSDEEEA) the composition is skewed to acidic residues. Positions 836 to 848 (SEERKPGAGEDTP) are enriched in basic and acidic residues. Serine 938 bears the Phosphoserine mark. The tract at residues 1044–1141 (LPGPASMPVP…PQAKPAPRAS (98 aa)) is disordered. Polar residues predominate over residues 1105-1131 (VGTSATTHKSNSSWQTTRPTAPGTSWP). Position 1122 is an omega-N-methylarginine (arginine 1122). A Phosphoserine modification is found at serine 1171. A J domain is found at 1241–1305 (SRWTPVSMAD…FENQGSRPLF (65 aa)).

This sequence belongs to the protein kinase superfamily. Ser/Thr protein kinase family.

It is found in the cytoplasm. It localises to the perinuclear region. Its subcellular location is the golgi apparatus. The protein localises to the trans-Golgi network. The protein resides in the cell junction. It is found in the focal adhesion. It localises to the cytoplasmic vesicle. Its subcellular location is the clathrin-coated vesicle. It carries out the reaction L-seryl-[protein] + ATP = O-phospho-L-seryl-[protein] + ADP + H(+). The enzyme catalyses L-threonyl-[protein] + ATP = O-phospho-L-threonyl-[protein] + ADP + H(+). Its function is as follows. Associates with cyclin G and CDK5. Seems to act as an auxilin homolog that is involved in the uncoating of clathrin-coated vesicles by Hsc70 in non-neuronal cells. Expression oscillates slightly during the cell cycle, peaking at G1. May play a role in clathrin-mediated endocytosis and intracellular trafficking, and in the dynamics of clathrin assembly/disassembly. This is Cyclin-G-associated kinase from Rattus norvegicus (Rat).